A 388-amino-acid chain; its full sequence is 1-deoxy-D-xylulose 5-phosphate reductoisomerase (388 aa).

Residues threonine 15, glycine 16, serine 17, isoleucine 18, and asparagine 127 each coordinate NADPH. A 1-deoxy-D-xylulose 5-phosphate-binding site is contributed by lysine 128. Glutamate 129 contacts NADPH. Mn(2+) is bound at residue aspartate 153. Residues serine 154, glutamate 155, serine 179, and histidine 202 each contribute to the 1-deoxy-D-xylulose 5-phosphate site. Glutamate 155 contributes to the Mn(2+) binding site. Glycine 208 provides a ligand contact to NADPH. 1-deoxy-D-xylulose 5-phosphate-binding residues include serine 215, asparagine 220, lysine 221, and glutamate 224. Glutamate 224 lines the Mn(2+) pocket.

It belongs to the DXR family. Requires Mg(2+) as cofactor. The cofactor is Mn(2+).

It catalyses the reaction 2-C-methyl-D-erythritol 4-phosphate + NADP(+) = 1-deoxy-D-xylulose 5-phosphate + NADPH + H(+). It participates in isoprenoid biosynthesis; isopentenyl diphosphate biosynthesis via DXP pathway; isopentenyl diphosphate from 1-deoxy-D-xylulose 5-phosphate: step 1/6. Its function is as follows. Catalyzes the NADPH-dependent rearrangement and reduction of 1-deoxy-D-xylulose-5-phosphate (DXP) to 2-C-methyl-D-erythritol 4-phosphate (MEP). This chain is 1-deoxy-D-xylulose 5-phosphate reductoisomerase, found in Bacteroides fragilis (strain YCH46).